The chain runs to 266 residues: Integral membrane protein 2B (266 aa).

The Cytoplasmic segment spans residues 1–54 (MVKVTFNSALAQKEAKKDEPKSGEEALIIPPDAVAVDCKDPDDVVPVGQRRAWC). The helical; Signal-anchor for type II membrane protein transmembrane segment at 55–75 (WCMCFGLAFMLAGVILGGAYL) threads the bilayer. Residues 76–266 (YKYFALQPDD…KFAVETLICS (191 aa)) lie on the Lumenal side of the membrane. Positions 102–134 (EPSADAPAALYQTIEENIKIFEEEEVEFISVPV) are necessary for interaction with APP and inhibitor effects on APP processing. The BRICHOS domain occupies 137–231 (FADSDPANIV…LCHDKETYKL (95 aa)). Disulfide bonds link C164-C223 and C248-C265. N170 is a glycosylation site (N-linked (GlcNAc...) asparagine).

This sequence belongs to the ITM2 family. Homodimer; disulfide-linked. Interacts with SPPL2A and SPPL2B. Interacts with APP. Mature BRI2 (mBRI2) interacts with the APP amyloid-beta A4 protein; the interaction occurs at the cell surface and in the endocytic compartments and enable alpha- and beta-secretase-induced APP cleavage inhibition. Mature BRI2 (mBRI2) interacts with the APP C99; the interaction occurs in the endocytic compartments and enable gamma-secretase-induced C99 cleavage inhibition. May form heterodimers with Bri23 peptide and APP amyloid-beta protein 40. Interacts with ADAM7 in sperm; the interaction increases following capacitation. Post-translationally, the ectodomain C-terminal part of the imBRI2 is processed by furin producing a secreted Bri23 peptide and a mature BRI2, membrane form (mBRI2). The remaining part of the ectodomain of mBRI2 containing the BRICHOS domain is cleaved by ADAM10 and is secreted (BRI2C, soluble form). The membrane-bound N-terminal fragment (BRI2C, membrane form) is further proteolytically processed by SPPL2A and SPPL2B through regulated intramembrane proteolysis producing a secreted C-peptide and a BRI2 intracellular domain (BRI2 ICD) released in the cytosol. Shedding by ADAM10 facilitates intramembrane cleavage but is not absolutely required for BRI2 ICD generation. Glycosylation at Asn-170 is important for cell surface localization, but doesn't affect furin- and ADAM10-induced proteolytic processing. As to expression, ubiquitous. Expressed in brain.

The protein resides in the golgi apparatus membrane. It is found in the cell membrane. It localises to the endosome membrane. Its subcellular location is the secreted. Plays a regulatory role in the processing of the amyloid-beta A4 precursor protein (APP) and acts as an inhibitor of the amyloid-beta peptide aggregation and fibrils deposition. Plays a role in the induction of neurite outgrowth. Functions as a protease inhibitor by blocking access of secretases to APP cleavage sites. In terms of biological role, mature BRI2 (mBRI2) functions as a modulator of the amyloid-beta A4 precursor protein (APP) processing leading to a strong reduction in the secretion of secretase-processed amyloid-beta protein 40 and amyloid-beta protein 42. Its function is as follows. Bri23 peptide prevents aggregation of APP amyloid-beta protein 42 into toxic oligomers. The polypeptide is Integral membrane protein 2B (ITM2B) (Homo sapiens (Human)).